We begin with the raw amino-acid sequence, 122 residues long: Ribosomal silencing factor RsfS (122 aa).

The protein belongs to the Iojap/RsfS family. In terms of assembly, interacts with ribosomal protein uL14 (rplN).

Its subcellular location is the cytoplasm. Functions as a ribosomal silencing factor. Interacts with ribosomal protein uL14 (rplN), blocking formation of intersubunit bridge B8. Prevents association of the 30S and 50S ribosomal subunits and the formation of functional ribosomes, thus repressing translation. This is Ribosomal silencing factor RsfS from Chromobacterium violaceum (strain ATCC 12472 / DSM 30191 / JCM 1249 / CCUG 213 / NBRC 12614 / NCIMB 9131 / NCTC 9757 / MK).